Reading from the N-terminus, the 552-residue chain is Methyl-coenzyme M reductase II subunit alpha (552 aa).

Coenzyme F430 is bound at residue Q150. Coenzyme B is bound by residues R228, 259–260 (KH), and R273. Positions 335 and 446 each coordinate coenzyme M.

Belongs to the methyl-coenzyme M reductase alpha subunit family. As to quaternary structure, MCR is a hexamer of two alpha, two beta, and two gamma chains, forming a dimer of heterotrimers. It depends on coenzyme F430 as a cofactor.

The enzyme catalyses coenzyme B + methyl-coenzyme M = methane + coenzyme M-coenzyme B heterodisulfide. It participates in one-carbon metabolism; methyl-coenzyme M reduction; methane from methyl-coenzyme M: step 1/1. Component of the methyl-coenzyme M reductase (MCR) I that catalyzes the reductive cleavage of methyl-coenzyme M (CoM-S-CH3 or 2-(methylthio)ethanesulfonate) using coenzyme B (CoB or 7-mercaptoheptanoylthreonine phosphate) as reductant which results in the production of methane and the mixed heterodisulfide of CoB and CoM (CoM-S-S-CoB). This is the final step in methanogenesis. This is Methyl-coenzyme M reductase II subunit alpha (mrtA) from Methanocaldococcus jannaschii (strain ATCC 43067 / DSM 2661 / JAL-1 / JCM 10045 / NBRC 100440) (Methanococcus jannaschii).